Here is a 351-residue protein sequence, read N- to C-terminus: Protein RecA (351 aa).

67-74 serves as a coordination point for ATP; it reads GPESSGKT.

It belongs to the RecA family.

The protein localises to the cytoplasm. Functionally, can catalyze the hydrolysis of ATP in the presence of single-stranded DNA, the ATP-dependent uptake of single-stranded DNA by duplex DNA, and the ATP-dependent hybridization of homologous single-stranded DNAs. It interacts with LexA causing its activation and leading to its autocatalytic cleavage. This chain is Protein RecA, found in Mannheimia succiniciproducens (strain KCTC 0769BP / MBEL55E).